The following is a 96-amino-acid chain: UPF0251 protein Shal_3723 (96 aa).

The protein belongs to the UPF0251 family.

The chain is UPF0251 protein Shal_3723 from Shewanella halifaxensis (strain HAW-EB4).